The following is a 321-amino-acid chain: Biotin synthase (321 aa).

The region spanning 44–273 (FCGNVFDLCT…DGFVRIAAGR (230 aa)) is the Radical SAM core domain. Positions 62, 66, and 69 each coordinate [4Fe-4S] cluster. The [2Fe-2S] cluster site is built by serine 106, cysteine 138, cysteine 198, and arginine 268.

This sequence belongs to the radical SAM superfamily. Biotin synthase family. As to quaternary structure, homodimer. Requires [4Fe-4S] cluster as cofactor. It depends on [2Fe-2S] cluster as a cofactor.

The enzyme catalyses (4R,5S)-dethiobiotin + (sulfur carrier)-SH + 2 reduced [2Fe-2S]-[ferredoxin] + 2 S-adenosyl-L-methionine = (sulfur carrier)-H + biotin + 2 5'-deoxyadenosine + 2 L-methionine + 2 oxidized [2Fe-2S]-[ferredoxin]. Its pathway is cofactor biosynthesis; biotin biosynthesis; biotin from 7,8-diaminononanoate: step 2/2. Its function is as follows. Catalyzes the conversion of dethiobiotin (DTB) to biotin by the insertion of a sulfur atom into dethiobiotin via a radical-based mechanism. The sequence is that of Biotin synthase from Akkermansia muciniphila (strain ATCC BAA-835 / DSM 22959 / JCM 33894 / BCRC 81048 / CCUG 64013 / CIP 107961 / Muc).